We begin with the raw amino-acid sequence, 145 residues long: D-aminoacyl-tRNA deacylase (145 aa).

The short motif at 137–138 (GP) is the Gly-cisPro motif, important for rejection of L-amino acids element.

The protein belongs to the DTD family. As to quaternary structure, homodimer.

Its subcellular location is the cytoplasm. It carries out the reaction glycyl-tRNA(Ala) + H2O = tRNA(Ala) + glycine + H(+). It catalyses the reaction a D-aminoacyl-tRNA + H2O = a tRNA + a D-alpha-amino acid + H(+). Functionally, an aminoacyl-tRNA editing enzyme that deacylates mischarged D-aminoacyl-tRNAs. Also deacylates mischarged glycyl-tRNA(Ala), protecting cells against glycine mischarging by AlaRS. Acts via tRNA-based rather than protein-based catalysis; rejects L-amino acids rather than detecting D-amino acids in the active site. By recycling D-aminoacyl-tRNA to D-amino acids and free tRNA molecules, this enzyme counteracts the toxicity associated with the formation of D-aminoacyl-tRNA entities in vivo and helps enforce protein L-homochirality. The sequence is that of D-aminoacyl-tRNA deacylase from Pseudomonas putida (strain GB-1).